Here is an 852-residue protein sequence, read N- to C-terminus: Phenylalanine--tRNA ligase beta subunit (852 aa).

Positions 44 to 159 constitute a tRNA-binding domain; it reads PETTGPLVIG…DADLASANLK (116 aa). One can recognise a B5 domain in the interval 428 to 510; the sequence is PEMPMITIHT…RLEGLEDIPS (83 aa). D488, D494, E497, and E498 together coordinate Mg(2+). The region spanning 758–851 is the FDX-ACB domain; sequence SAFPAVLQDI…ATEKVGAQLR (94 aa).

This sequence belongs to the phenylalanyl-tRNA synthetase beta subunit family. Type 1 subfamily. As to quaternary structure, tetramer of two alpha and two beta subunits. Requires Mg(2+) as cofactor.

The protein resides in the cytoplasm. It carries out the reaction tRNA(Phe) + L-phenylalanine + ATP = L-phenylalanyl-tRNA(Phe) + AMP + diphosphate + H(+). The protein is Phenylalanine--tRNA ligase beta subunit of Corynebacterium jeikeium (strain K411).